A 647-amino-acid chain; its full sequence is DNA topoisomerase 4 subunit B (647 aa).

ATP contacts are provided by residues Y11, N51, D78, 118 to 124 (GLHGVGS), and K344. The span at 391–401 (AARKARDESRN) shows a compositional bias: basic and acidic residues. Positions 391-421 (AARKARDESRNGKKNKKDKGLLSGKLTPAQS) are disordered. The 115-residue stretch at 427–541 (NELYLVEGDS…AGHVYIALPP (115 aa)) folds into the Toprim domain. Mg(2+) contacts are provided by E433, D506, and D508.

It belongs to the type II topoisomerase family. ParE type 2 subfamily. In terms of assembly, heterotetramer composed of ParC and ParE. The cofactor is Mg(2+). Mn(2+) serves as cofactor. Requires Ca(2+) as cofactor.

The catalysed reaction is ATP-dependent breakage, passage and rejoining of double-stranded DNA.. Its activity is regulated as follows. Inhibited by quinolones, such as levofloxacin. Functionally, topoisomerase IV is essential for chromosome segregation. It relaxes supercoiled DNA. Performs the decatenation events required during the replication of a circular DNA molecule. The protein is DNA topoisomerase 4 subunit B of Streptococcus pneumoniae serotype 4 (strain ATCC BAA-334 / TIGR4).